The sequence spans 312 residues: Gamma-soluble NSF attachment protein (312 aa).

Residues 281 to 312 (KKKAAAPPQAKPEGTAAPAAEEEEDEYAGGLC) are disordered. Positions 285 to 299 (AAPPQAKPEGTAAPA) are enriched in low complexity. A compositionally biased stretch (acidic residues) spans 300–312 (AEEEEDEYAGGLC).

This sequence belongs to the SNAP family. In terms of assembly, interacts with RAB11FIP5. Interacts with VTI1A.

It localises to the membrane. The protein resides in the golgi apparatus. Functionally, required for vesicular transport between the endoplasmic reticulum and the Golgi apparatus. This is Gamma-soluble NSF attachment protein from Bos taurus (Bovine).